The primary structure comprises 154 residues: Myoglobin (154 aa).

The Globin domain maps to 2 to 148 (GLSDGEWQLV…FRNDIAAKYK (147 aa)). At S4 the chain carries Phosphoserine. A nitrite-binding site is contributed by H65. H65 contributes to the O2 binding site. T68 carries the phosphothreonine modification. Residue H94 participates in heme b binding.

This sequence belongs to the globin family. As to quaternary structure, monomeric.

It localises to the cytoplasm. Its subcellular location is the sarcoplasm. The catalysed reaction is Fe(III)-heme b-[protein] + nitric oxide + H2O = Fe(II)-heme b-[protein] + nitrite + 2 H(+). It carries out the reaction H2O2 + AH2 = A + 2 H2O. In terms of biological role, monomeric heme protein which primary function is to store oxygen and facilitate its diffusion within muscle tissues. Reversibly binds oxygen through a pentacoordinated heme iron and enables its timely and efficient release as needed during periods of heightened demand. Depending on the oxidative conditions of tissues and cells, and in addition to its ability to bind oxygen, it also has a nitrite reductase activity whereby it regulates the production of bioactive nitric oxide. Under stress conditions, like hypoxia and anoxia, it also protects cells against reactive oxygen species thanks to its pseudoperoxidase activity. This Lagostomus maximus (Plains viscacha) protein is Myoglobin (MB).